A 285-amino-acid polypeptide reads, in one-letter code: Shikimate dehydrogenase (NADP(+)) (285 aa).

Residues 20–22 (SLS) and Thr67 contribute to the shikimate site. Lys71 serves as the catalytic Proton acceptor. An NADP(+)-binding site is contributed by Glu83. Residues Asn92 and Asp107 each coordinate shikimate. Residues 132–136 (GAGGA) and Leu230 contribute to the NADP(+) site. Position 232 (Tyr232) interacts with shikimate. Gly253 contacts NADP(+).

The protein belongs to the shikimate dehydrogenase family. As to quaternary structure, homodimer.

The enzyme catalyses shikimate + NADP(+) = 3-dehydroshikimate + NADPH + H(+). It functions in the pathway metabolic intermediate biosynthesis; chorismate biosynthesis; chorismate from D-erythrose 4-phosphate and phosphoenolpyruvate: step 4/7. Involved in the biosynthesis of the chorismate, which leads to the biosynthesis of aromatic amino acids. Catalyzes the reversible NADPH linked reduction of 3-dehydroshikimate (DHSA) to yield shikimate (SA). The polypeptide is Shikimate dehydrogenase (NADP(+)) (Salinibacter ruber (strain DSM 13855 / M31)).